We begin with the raw amino-acid sequence, 271 residues long: Short-chain type dehydrogenase/reductase (271 aa).

Position 25–49 (25–49 (IVTGASRGIGREIALNMAEKGAKVV)) interacts with NAD(+). Serine 166 contributes to the substrate binding site. The Proton acceptor role is filled by tyrosine 179.

The protein belongs to the short-chain dehydrogenases/reductases (SDR) family.

The sequence is that of Short-chain type dehydrogenase/reductase from Picea abies (Norway spruce).